The sequence spans 892 residues: Transmembrane channel-like protein 2-B (892 aa).

The interval 29–125 (GINQNLRREE…DESMSEGEMA (97 aa)) is disordered. Basic residues-rich tracts occupy residues 48 to 58 (RRAKKRRMNRR) and 66 to 77 (RSKKMRMRVRKN). Over residues 103–112 (PSSCSSSSDN) the composition is skewed to low complexity. A run of 9 helical transmembrane segments spans residues 235–255 (LVLF…MGIP), 275–295 (FSVL…YGFY), 308–328 (LPLS…MVVI), 403–423 (LANV…YAVV), 444–464 (EVEI…EAIA), 482–502 (IFAL…DEVN), 616–636 (LIFN…LVGI), 671–691 (FYMG…IYSI), and 736–756 (GLII…LNAV). Residues 772 to 785 (QMQRDEEKNRRNNK) show a composition bias toward basic and acidic residues. Disordered regions lie at residues 772–791 (QMQR…TNQV) and 796–892 (EDLL…PPRR). Pro residues predominate over residues 862-878 (PRQPGPLPGNPRGPPPG).

This sequence belongs to the TMC family. In adults, expression is restricted to the hair cells of inner ear and lateral line organ. Expressed at higher levels in the larval lateral-line neuromasts than in the larval inner ear.

Its subcellular location is the membrane. In terms of biological role, probable component of the mechanotransducer (MET) non-selective cation channel. In Danio rerio (Zebrafish), this protein is Transmembrane channel-like protein 2-B.